The sequence spans 507 residues: Sensor protein CseC (507 aa).

The interval 1–42 (MRGFFRQRRSVSPPGHPYDRTGPGEHAGPGARTGPGGRPRVL) is disordered. Over residues 25 to 37 (EHAGPGARTGPGG) the composition is skewed to gly residues. Helical transmembrane passes span 60–80 (LSAA…LVVH) and 183–203 (ALVI…VLIG). Positions 204–260 (GQLSRRLREAAAAANRVASGEPDVRVRDAIGGVVRDETDDVARAVDAMADALQQRIE) constitute an HAMP domain. The 203-residue stretch at 268-470 (DIAHELRTPV…VAVLWLPEHA (203 aa)) folds into the Histidine kinase domain. H271 bears the Phosphohistidine; by autocatalysis mark. The tract at residues 472-507 (TNTGSYPMLPDRSKSGASSSARDMSREASQGMSRKP) is disordered. Positions 486-507 (SGASSSARDMSREASQGMSRKP) are enriched in polar residues.

It localises to the cell membrane. The enzyme catalyses ATP + protein L-histidine = ADP + protein N-phospho-L-histidine.. Member of the two-component regulatory system CseB/CseC involved in the stability of the cell envelope, through activation of transcription of RNA polymerase sigma-E factor. CseC functions as a membrane-associated protein kinase that phosphorylates CseB in response to changes in the cell envelope. The polypeptide is Sensor protein CseC (cseC) (Streptomyces coelicolor (strain ATCC BAA-471 / A3(2) / M145)).